The following is a 237-amino-acid chain: Oligoribonuclease, mitochondrial (237 aa).

The transit peptide at 1 to 25 (MLGVSLGARLLRGVGGRRGQFGARG) directs the protein to the mitochondrion. The Exonuclease domain maps to 43–207 (MVWVDLEMTG…DDISESIKEL (165 aa)). The Mg(2+) site is built by D47 and E49. S92 carries the post-translational modification Phosphoserine. At Y122 the chain carries Phosphotyrosine. Mg(2+) is bound at residue D147. K173 carries the N6-acetyllysine modification. H194 is a catalytic residue. D199 contributes to the Mg(2+) binding site.

It belongs to the oligoribonuclease family. Homodimer. Homotetramer. The cofactor is Mn(2+). Requires Mg(2+) as cofactor.

Its subcellular location is the mitochondrion intermembrane space. The protein localises to the mitochondrion matrix. It localises to the mitochondrion. The protein resides in the cytoplasm. It is found in the nucleus. Functionally, 3'-to-5'exoribonuclease that preferentially degrades DNA and RNA oligonucleotides composed of only two nucleotides. Binds and degrades longer oligonucleotides with a lower affinity. Plays dual roles in mitochondria, scavenging nanoRNAs (small RNA oligonucleotides of &lt;5 nucleotides) that are produced by the degradosome and clearing short RNAs that are generated by RNA processing. Essential for correct initiation of mitochondrial transcription, degrading mitochondrial RNA dinucleotides to prevent RNA-primed transcription at non-canonical sites in the mitochondrial genome. Essential for embryonic development. This is Oligoribonuclease, mitochondrial (Rexo2) from Mus musculus (Mouse).